Consider the following 97-residue polypeptide: Large ribosomal subunit protein uL23 (97 aa).

Belongs to the universal ribosomal protein uL23 family. As to quaternary structure, part of the 50S ribosomal subunit. Contacts protein L29, and trigger factor when it is bound to the ribosome.

Functionally, one of the early assembly proteins it binds 23S rRNA. One of the proteins that surrounds the polypeptide exit tunnel on the outside of the ribosome. Forms the main docking site for trigger factor binding to the ribosome. This chain is Large ribosomal subunit protein uL23, found in Chelativorans sp. (strain BNC1).